We begin with the raw amino-acid sequence, 524 residues long: Bifunctional purine biosynthesis protein PurH (524 aa).

An MGS-like domain is found at 1–145; it reads MIKQALLSVS…KNHRDVTVIV (145 aa).

Belongs to the PurH family.

The catalysed reaction is (6R)-10-formyltetrahydrofolate + 5-amino-1-(5-phospho-beta-D-ribosyl)imidazole-4-carboxamide = 5-formamido-1-(5-phospho-D-ribosyl)imidazole-4-carboxamide + (6S)-5,6,7,8-tetrahydrofolate. It carries out the reaction IMP + H2O = 5-formamido-1-(5-phospho-D-ribosyl)imidazole-4-carboxamide. It participates in purine metabolism; IMP biosynthesis via de novo pathway; 5-formamido-1-(5-phospho-D-ribosyl)imidazole-4-carboxamide from 5-amino-1-(5-phospho-D-ribosyl)imidazole-4-carboxamide (10-formyl THF route): step 1/1. It functions in the pathway purine metabolism; IMP biosynthesis via de novo pathway; IMP from 5-formamido-1-(5-phospho-D-ribosyl)imidazole-4-carboxamide: step 1/1. The polypeptide is Bifunctional purine biosynthesis protein PurH (Cupriavidus metallidurans (strain ATCC 43123 / DSM 2839 / NBRC 102507 / CH34) (Ralstonia metallidurans)).